Consider the following 539-residue polypeptide: Phosphoenolpyruvate carboxykinase (ATP) (539 aa).

Residues arginine 64, tyrosine 206, and lysine 212 each coordinate substrate. ATP-binding positions include lysine 212, histidine 231, and 247 to 255 (GLSGTGKTT). Mn(2+)-binding residues include lysine 212 and histidine 231. Aspartate 268 serves as a coordination point for Mn(2+). Residues glutamate 296, arginine 332, 448 to 449 (RI), and threonine 454 each bind ATP. A substrate-binding site is contributed by arginine 332.

This sequence belongs to the phosphoenolpyruvate carboxykinase (ATP) family. As to quaternary structure, monomer. It depends on Mn(2+) as a cofactor.

The protein localises to the cytoplasm. It carries out the reaction oxaloacetate + ATP = phosphoenolpyruvate + ADP + CO2. The protein operates within carbohydrate biosynthesis; gluconeogenesis. Its function is as follows. Involved in the gluconeogenesis. Catalyzes the conversion of oxaloacetate (OAA) to phosphoenolpyruvate (PEP) through direct phosphoryl transfer between the nucleoside triphosphate and OAA. The protein is Phosphoenolpyruvate carboxykinase (ATP) of Erwinia tasmaniensis (strain DSM 17950 / CFBP 7177 / CIP 109463 / NCPPB 4357 / Et1/99).